Consider the following 451-residue polypeptide: Cindoxin reductase (451 aa).

The FAD site is built by Ala24, Glu45, Leu53, and Val89. Residues 157-160 (NGNV) and 197-198 (RS) contribute to the NADP(+) site. FAD contacts are provided by residues Trp338 and 345–347 (GGI). Residue Gly345 participates in NADP(+) binding.

The protein belongs to the ferredoxin--NADP reductase type 1 family. FAD is required as a cofactor.

Its function is as follows. Involved in the degradation of cineol (eucalyptol). Catalyzes the reduction of cindoxin (CinC). This Citrobacter braakii protein is Cindoxin reductase (cinB).